The chain runs to 201 residues: Oxalate oxidase 1 (201 aa).

Cys-10 and Cys-26 form a disulfide bridge. The 152-residue stretch at 40–191 (SKLTKAGNTS…ALRVEAGVVE (152 aa)) folds into the Cupin type-1 domain. Asn-47 carries N-linked (GlcNAc...) asparagine glycosylation. Residues Asn-75 and Asn-85 each contribute to the oxalate site. Residues His-88, His-90, Glu-95, and His-137 each coordinate Mn(2+). 2 residues coordinate oxalate: His-90 and Glu-95.

The protein belongs to the germin family. In terms of assembly, homo hexamer; a trimer of dimers. Post-translationally, glycosylated. A form called G contains antennary GlcNAc residues, whereas a form called G' lacks antennary GlcNAc residues in its otherwise identical glycans.

The protein resides in the secreted. The protein localises to the extracellular space. It is found in the apoplast. It localises to the cell wall. The enzyme catalyses oxalate + O2 + 2 H(+) = H2O2 + 2 CO2. In terms of biological role, releases hydrogen peroxide in the apoplast which may be important for cross-linking reactions in the cell wall biochemistry. May play an important role in several aspects of plant growth and defense mechanisms. This is Oxalate oxidase 1 from Hordeum vulgare (Barley).